A 547-amino-acid chain; its full sequence is uncharacterized protein (547 aa).

The protein to B.subtilis RocB.

This is an uncharacterized protein from Bacillus subtilis (strain 168).